The chain runs to 212 residues: Ribosomal RNA small subunit methyltransferase G (212 aa).

S-adenosyl-L-methionine contacts are provided by residues G80, L85, A131–E132, and R146.

It belongs to the methyltransferase superfamily. RNA methyltransferase RsmG family.

Its subcellular location is the cytoplasm. It catalyses the reaction guanosine(527) in 16S rRNA + S-adenosyl-L-methionine = N(7)-methylguanosine(527) in 16S rRNA + S-adenosyl-L-homocysteine. Its function is as follows. Specifically methylates the N7 position of guanine in position 527 of 16S rRNA. In Xylella fastidiosa (strain M23), this protein is Ribosomal RNA small subunit methyltransferase G.